Reading from the N-terminus, the 403-residue chain is Acetate kinase (403 aa).

Residue N7 coordinates Mg(2+). K14 is a binding site for ATP. Position 95 (R95) interacts with substrate. D152 functions as the Proton donor/acceptor in the catalytic mechanism. ATP contacts are provided by residues 212–216 (HLGNG), 286–288 (DMR), and 335–339 (GIGEN). A Mg(2+)-binding site is contributed by E389.

This sequence belongs to the acetokinase family. In terms of assembly, homodimer. Mg(2+) is required as a cofactor. Requires Mn(2+) as cofactor.

Its subcellular location is the cytoplasm. The catalysed reaction is acetate + ATP = acetyl phosphate + ADP. Its pathway is metabolic intermediate biosynthesis; acetyl-CoA biosynthesis; acetyl-CoA from acetate: step 1/2. Functionally, catalyzes the formation of acetyl phosphate from acetate and ATP. Can also catalyze the reverse reaction. The sequence is that of Acetate kinase from Desulfovibrio desulfuricans (strain ATCC 27774 / DSM 6949 / MB).